We begin with the raw amino-acid sequence, 434 residues long: Enolase (434 aa).

Q166 serves as a coordination point for (2R)-2-phosphoglycerate. E208 functions as the Proton donor in the catalytic mechanism. Mg(2+) contacts are provided by D245, E290, and D317. (2R)-2-phosphoglycerate contacts are provided by K342, R371, S372, and K393. K342 acts as the Proton acceptor in catalysis.

The protein belongs to the enolase family. Mg(2+) is required as a cofactor.

It is found in the cytoplasm. It localises to the secreted. Its subcellular location is the cell surface. It catalyses the reaction (2R)-2-phosphoglycerate = phosphoenolpyruvate + H2O. It functions in the pathway carbohydrate degradation; glycolysis; pyruvate from D-glyceraldehyde 3-phosphate: step 4/5. Its function is as follows. Catalyzes the reversible conversion of 2-phosphoglycerate (2-PG) into phosphoenolpyruvate (PEP). It is essential for the degradation of carbohydrates via glycolysis. This Caldicellulosiruptor bescii (strain ATCC BAA-1888 / DSM 6725 / KCTC 15123 / Z-1320) (Anaerocellum thermophilum) protein is Enolase.